Reading from the N-terminus, the 65-residue chain is Large ribosomal subunit protein bL35 (65 aa).

Residues 1–51 (MPKMKTNRAAAKRFKKTANGGLKSANAYTSHRFHGKTKKQRRQLRGTDMMD) form a disordered region. A compositionally biased stretch (basic residues) spans 31–44 (HRFHGKTKKQRRQL).

It belongs to the bacterial ribosomal protein bL35 family.

This chain is Large ribosomal subunit protein bL35, found in Pediococcus pentosaceus (strain ATCC 25745 / CCUG 21536 / LMG 10740 / 183-1w).